The chain runs to 444 residues: 3-phosphoshikimate 1-carboxyvinyltransferase (444 aa).

Lys29, Ser30, and Arg34 together coordinate 3-phosphoshikimate. Phosphoenolpyruvate is bound at residue Lys29. 2 residues coordinate phosphoenolpyruvate: Gly103 and Arg132. Residues Ser177, Gln179, Asp329, and Lys356 each contribute to the 3-phosphoshikimate site. Gln179 is a phosphoenolpyruvate binding site. Asp329 serves as the catalytic Proton acceptor. Phosphoenolpyruvate contacts are provided by Arg360 and Arg402.

It belongs to the EPSP synthase family. In terms of assembly, monomer.

It is found in the cytoplasm. It carries out the reaction 3-phosphoshikimate + phosphoenolpyruvate = 5-O-(1-carboxyvinyl)-3-phosphoshikimate + phosphate. It participates in metabolic intermediate biosynthesis; chorismate biosynthesis; chorismate from D-erythrose 4-phosphate and phosphoenolpyruvate: step 6/7. Its function is as follows. Catalyzes the transfer of the enolpyruvyl moiety of phosphoenolpyruvate (PEP) to the 5-hydroxyl of shikimate-3-phosphate (S3P) to produce enolpyruvyl shikimate-3-phosphate and inorganic phosphate. The sequence is that of 3-phosphoshikimate 1-carboxyvinyltransferase from Prochlorococcus marinus (strain NATL2A).